Reading from the N-terminus, the 479-residue chain is 5-hydroxytryptamine receptor 2B (479 aa).

At 1–55 the chain is on the extracellular side; sequence MASSYKMSEQSTTSEHILQKTCDHLILTNRSGLETDSVAEEMKQTVEGQGHTVHW. N29 is a glycosylation site (N-linked (GlcNAc...) asparagine). A helical transmembrane segment spans residues 56 to 78; the sequence is AALLILAVIIPTIGGNILVILAV. Residues 79-89 lie on the Cytoplasmic side of the membrane; it reads ALEKRLQYATN. Residues 90 to 112 form a helical membrane-spanning segment; that stretch reads YFLMSLAIADLLVGLFVMPIALL. The Extracellular segment spans residues 113-128; that stretch reads TIMFEAIWPLPLALCP. Cysteines 127 and 206 form a disulfide. A helical transmembrane segment spans residues 129–150; that stretch reads AWLFLDVLFSTASIMHLCAISL. Residues D134 and T139 each contribute to the ergotamine site. Positions 151–153 match the DRY motif; important for ligand-induced conformation changes motif; that stretch reads DRY. The Cytoplasmic segment spans residues 151–170; it reads DRYIAIKKPIQANQCNSRAT. The chain crosses the membrane as a helical span at residues 171–191; that stretch reads AFIKITVVWLISIGIAIPVPI. Over 192–215 the chain is Extracellular; it reads KGIETDVINPHNVTCELTKDRFGS. Residue L208 coordinates ergotamine. The short motif at 211 to 214 is the [DE]RFG motif; may stabilize a conformation that preferentially activates signaling via beta-arrestin family members element; that stretch reads DRFG. A helical membrane pass occupies residues 216–238; the sequence is FMVFGSLAAFFAPLTIMVVTYFL. The Cytoplasmic portion of the chain corresponds to 239–323; the sequence is TIHTLQKKAY…TISNEQRASK (85 aa). Residues 324–344 form a helical membrane-spanning segment; it reads ALGVVFFLFLLMWCPFFITNL. Over 345–359 the chain is Extracellular; that stretch reads TLALCDSCNQTTLKT. C349 and C352 form a disulfide bridge. The helical transmembrane segment at 360-381 threads the bilayer; sequence LLEIFVWIGYVSSGVNPLIYTL. Positions 375–379 match the NPxxY motif; important for ligand-induced conformation changes and signaling motif; that stretch reads NPLIY. Topologically, residues 382-479 are cytoplasmic; sequence FNKTFREAFG…DKAEEQVSYI (98 aa). A lipid anchor (S-palmitoyl cysteine) is attached at C396. Positions 477 to 479 match the PDZ-binding motif; that stretch reads SYI.

The protein belongs to the G-protein coupled receptor 1 family. In terms of assembly, interacts (via C-terminus) with MPDZ. Ubiquitous. Detected in intestine, heart, skeletal muscle, testis, urinary bladder, stomach, liver, lung, brain and kidney. Detected in osteoblasts. Detected in the raphe nucleus in the brain, in dorsal root ganglion neurons, the brain stem, cerebellum and spinal cord. Detected in interstitial cells of Cajal in the small intestine.

It is found in the cell membrane. It localises to the synapse. Its subcellular location is the synaptosome. Functionally, G-protein coupled receptor for 5-hydroxytryptamine (serotonin). Also functions as a receptor for various ergot alkaloid derivatives and psychoactive substances. Ligand binding causes a conformation change that triggers signaling via guanine nucleotide-binding proteins (G proteins) and modulates the activity of downstream effectors. HTR2B is coupled to G(q)/G(11) G alpha proteins and activates phospholipase C-beta, releasing diacylglycerol (DAG) and inositol 1,4,5-trisphosphate (IP3) second messengers that modulate the activity of phosphatidylinositol 3-kinase and promote the release of Ca(2+) ions from intracellular stores, respectively. Beta-arrestin family members inhibit signaling via G proteins and mediate activation of alternative signaling pathways. Plays a role in the regulation of dopamine and 5-hydroxytryptamine release, 5-hydroxytryptamine uptake and in the regulation of extracellular dopamine and 5-hydroxytryptamine levels, and thereby affects neural activity. May play a role in the perception of pain. Plays a role in the regulation of behavior, including impulsive behavior. Required for normal proliferation of embryonic cardiac myocytes and normal heart development. Protects cardiomyocytes against apoptosis. Plays a role in the adaptation of pulmonary arteries to chronic hypoxia. Plays a role in vasoconstriction. Required for normal osteoblast function and proliferation, and for maintaining normal bone density. Required for normal proliferation of the interstitial cells of Cajal in the intestine. The polypeptide is 5-hydroxytryptamine receptor 2B (Htr2b) (Mus musculus (Mouse)).